A 173-amino-acid polypeptide reads, in one-letter code: Phosphopantetheine adenylyltransferase (173 aa).

Position 9 (Ser9) interacts with substrate. Residues 9–10 (SF) and His17 contribute to the ATP site. The substrate site is built by Lys41, Thr73, and Arg87. ATP contacts are provided by residues 88–90 (GVR), Glu98, and 123–129 (YQYLSSS).

Belongs to the bacterial CoaD family. Homohexamer. It depends on Mg(2+) as a cofactor.

Its subcellular location is the cytoplasm. The enzyme catalyses (R)-4'-phosphopantetheine + ATP + H(+) = 3'-dephospho-CoA + diphosphate. It functions in the pathway cofactor biosynthesis; coenzyme A biosynthesis; CoA from (R)-pantothenate: step 4/5. Reversibly transfers an adenylyl group from ATP to 4'-phosphopantetheine, yielding dephospho-CoA (dPCoA) and pyrophosphate. The polypeptide is Phosphopantetheine adenylyltransferase (Limosilactobacillus fermentum (strain NBRC 3956 / LMG 18251) (Lactobacillus fermentum)).